Consider the following 391-residue polypeptide: Processive diacylglycerol beta-glucosyltransferase (391 aa).

It belongs to the glycosyltransferase 28 family. UgtP subfamily.

It localises to the cell membrane. The catalysed reaction is a 1,2-diacyl-3-O-(beta-D-glucopyranosyl)-sn-glycerol + UDP-alpha-D-glucose = a 1,2-diacyl-3-O-(beta-D-Glc-(1-&gt;6)-beta-D-Glc)-sn-glycerol + UDP + H(+). It carries out the reaction a 1,2-diacyl-sn-glycerol + UDP-alpha-D-glucose = a 1,2-diacyl-3-O-(beta-D-glucopyranosyl)-sn-glycerol + UDP + H(+). It participates in glycolipid metabolism; diglucosyl-diacylglycerol biosynthesis. Functionally, processive glucosyltransferase involved in the biosynthesis of both the bilayer- and non-bilayer-forming membrane glucolipids. Is able to successively transfer two glucosyl residues to diacylglycerol (DAG), thereby catalyzing the formation of beta-monoglucosyl-DAG (3-O-(beta-D-glucopyranosyl)-1,2-diacyl-sn-glycerol) and beta-diglucosyl-DAG (3-O-(beta-D-glucopyranosyl-beta-(1-&gt;6)-D-glucopyranosyl)-1,2-diacyl-sn-glycerol). Beta-diglucosyl-DAG is the predominant glycolipid found in Bacillales and is also used as a membrane anchor for lipoteichoic acid (LTA). In Staphylococcus carnosus (strain TM300), this protein is Processive diacylglycerol beta-glucosyltransferase.